A 70-amino-acid polypeptide reads, in one-letter code: Conotoxin Pl171 (70 aa).

The signal sequence occupies residues 1–21; sequence MGMRMMFTMILLVVLVTTVVS. 2 cysteine pairs are disulfide-bonded: cysteine 54/cysteine 61 and cysteine 55/cysteine 67. Phenylalanine amide is present on phenylalanine 69.

It belongs to the conotoxin A superfamily. As to expression, expressed by the venom duct.

The protein resides in the secreted. Functionally, probable neurotoxin with unknown target. Possibly targets ion channels. This is Conotoxin Pl171 from Conus planorbis (Planorbis cone).